The chain runs to 303 residues: Type II methyltransferase M.MjaI (303 aa).

It belongs to the N(4)/N(6)-methyltransferase family. N(4) subfamily.

The enzyme catalyses a 2'-deoxycytidine in DNA + S-adenosyl-L-methionine = an N(4)-methyl-2'-deoxycytidine in DNA + S-adenosyl-L-homocysteine + H(+). A beta subtype methylase that recognizes the double-stranded sequence 5'-CTAG-3', methylates C-1 on both strands, and protects the DNA from cleavage by the MjaI endonuclease. This is Type II methyltransferase M.MjaI (mjaIM) from Methanocaldococcus jannaschii (strain ATCC 43067 / DSM 2661 / JAL-1 / JCM 10045 / NBRC 100440) (Methanococcus jannaschii).